We begin with the raw amino-acid sequence, 113 residues long: U11-theraphotoxin-Hhn1a (113 aa).

The first 21 residues, 1–21 (MNTVRVTFLLVFVLAVSLGQA), serve as a signal peptide directing secretion. The propeptide occupies 22-74 (DKDENRMEMQEKTEQGKSYLDFAENLLLQKLEELEAKLPEEDSEESRNSRQKR). Positions 58 to 69 (KLPEEDSEESRN) are enriched in basic and acidic residues. A disordered region spans residues 58–82 (KLPEEDSEESRNSRQKRCIGEGVPC). 3 disulfides stabilise this stretch: cysteine 75–cysteine 90, cysteine 82–cysteine 95, and cysteine 89–cysteine 110.

Belongs to the neurotoxin 14 (magi-1) family. 01 (HNTX-16) subfamily. As to expression, expressed by the venom gland.

The protein resides in the secreted. In terms of biological role, probable ion channel inhibitor. The protein is U11-theraphotoxin-Hhn1a of Cyriopagopus hainanus (Chinese bird spider).